The sequence spans 196 residues: Probable malonic semialdehyde reductase RutE (196 aa).

It belongs to the nitroreductase family. HadB/RutE subfamily. FMN serves as cofactor.

It catalyses the reaction 3-hydroxypropanoate + NADP(+) = 3-oxopropanoate + NADPH + H(+). In terms of biological role, may reduce toxic product malonic semialdehyde to 3-hydroxypropionic acid, which is excreted. The protein is Probable malonic semialdehyde reductase RutE of Escherichia coli (strain SMS-3-5 / SECEC).